Reading from the N-terminus, the 85-residue chain is COMM domain-containing protein 6 (85 aa).

The residue at position 1 (Met1) is an N-acetylmethionine. The 68-residue stretch at 18–85 folds into the COMM domain; the sequence is QLVDFQWKLG…KEIAAVIETV (68 aa).

Belongs to the COMM domain-containing protein 6 family. Component of the commander complex consisting of the CCC subcomplex and the retriever subcomplex. Component of the CCC (COMMD/CCDC22/CCDC93) subcomplex consisting of COMMD1, COMMD2, COMMD3, COMMD4, COMMD5, COMMD6, COMMD7, COMMD8, COMMD9, COMMD10, CCDC22 and CCDC93; within the complex forms a heterodimer with COMMD1. May form a homodimer with isoform 1. Interacts with RELA, RELB, NFKB1/p105. Does not interact with NFKBIB. Interacts with CCDC22, CCDC93, SCNN1B, CUL4A. Ubiquitous. Expressed in brain, heart, skeletal muscle, lung, pancreas, liver, kidney, small intestine and placenta.

The protein resides in the nucleus. It localises to the cytoplasm. In terms of biological role, scaffold protein in the commander complex that is essential for endosomal recycling of transmembrane cargos; the commander complex is composed of the CCC subcomplex and the retriever subcomplex. May modulate activity of cullin-RING E3 ubiquitin ligase (CRL) complexes. Down-regulates activation of NF-kappa-B. Inhibits TNF-induced NFKB1 activation. The chain is COMM domain-containing protein 6 (COMMD6) from Homo sapiens (Human).